The primary structure comprises 87 residues: Protein moa-2 (87 aa).

A disordered region spans residues 23–87; sequence GTAMRHEPSR…VWTASREESS (65 aa). Basic and acidic residues-rich tracts occupy residues 26–39 and 50–63; these read MRHEPSRMDCESAP and RNEHVYCRCGEREP.

The sequence is that of Protein moa-2 from Caenorhabditis elegans.